A 680-amino-acid polypeptide reads, in one-letter code: WD repeat-containing protein 48 homolog (680 aa).

WD repeat units lie at residues 26 to 65, 71 to 110, 113 to 152, 164 to 203, 206 to 245, 248 to 287, 290 to 329, and 350 to 389; these read QHRNGVNALQLDANNGKLYSAGRDAIIRVWNTRTDSSEKY, HHNDWVNDIVLCCNGRNLISASCDTTVKVWNAQKGFCMST, THRDYVQALAYAKDREQVASAGLDKAIFLWDVNTLTALTA, GSKDSIYSLAMNPSGTVIVSGSTENILRIWDPRTCMRSMK, GHTENVRCLVVSPDGNQVVSGSSDGTIKVWNLGQQRCVQT, VHKEGVWSLLMSENFQYIISGSRDRNIIVTEMRNPSNKTL, EEQAPVLSLGYNIDKTGVWATTWNSDIRCWKLPMYDRCTM, and KGGAAIKECAVLNDKRYIITKDSQDQVVVYDVLRVVKKEQ. The disordered stretch occupies residues 592–616; that stretch reads ETTPSGGNANNSLQNSQSDANSEGS.

Belongs to the WD repeat WDR48 family. Catalytic component of the Usp12-46 deubiquitylase complex consisting of Usp12-46, Wdr20 and Uaf1; regulatory subunit that, together wtih Wdr20, stabilizes Usp12-46. The Usp12-46 deubiquitylase complex associates with arr/arrow; the interaction leads to deubiquitination and stabilization of arr/arrow.

Regulatory component of the Usp12-46 deubiquitylase complex. activates deubiquitination by increasing the catalytic turnover without increasing the affinity of deubiquitinating enzymes for the substrate. The complex deubiquitylates the wg/wingless-signaling receptor arr/arrow, which stabilizes the receptor and increases its concentration at the cell surface; this enhances the sensitivity of cells to wg/wingless-signal stimulation. This increases the amplitude and spatial range of the signaling response to the wg/wingless morphogen gradient, facilitating the precise concentration-dependent regulation of its target genes. Together with Wdr20 and Usp12-46 required for wg/wingless-mediated signaling in the wing imaginal disc and for wg/wingless-dependent regulation of intestinal stem cell proliferation. In Drosophila erecta (Fruit fly), this protein is WD repeat-containing protein 48 homolog.